We begin with the raw amino-acid sequence, 426 residues long: 3-phosphoshikimate 1-carboxyvinyltransferase (426 aa).

Residues Lys-22, Ser-23, and Arg-27 each contribute to the 3-phosphoshikimate site. Residue Lys-22 participates in phosphoenolpyruvate binding. Residues Gly-96 and Arg-124 each contribute to the phosphoenolpyruvate site. Positions 170, 171, 172, 198, 314, 337, and 341 each coordinate 3-phosphoshikimate. Gln-172 contacts phosphoenolpyruvate. Asp-314 functions as the Proton acceptor in the catalytic mechanism. Positions 345, 387, and 412 each coordinate phosphoenolpyruvate.

This sequence belongs to the EPSP synthase family. Monomer.

It localises to the cytoplasm. The catalysed reaction is 3-phosphoshikimate + phosphoenolpyruvate = 5-O-(1-carboxyvinyl)-3-phosphoshikimate + phosphate. It participates in metabolic intermediate biosynthesis; chorismate biosynthesis; chorismate from D-erythrose 4-phosphate and phosphoenolpyruvate: step 6/7. Its function is as follows. Catalyzes the transfer of the enolpyruvyl moiety of phosphoenolpyruvate (PEP) to the 5-hydroxyl of shikimate-3-phosphate (S3P) to produce enolpyruvyl shikimate-3-phosphate and inorganic phosphate. This Photobacterium damsela subsp. piscicida (Pasteurella piscicida) protein is 3-phosphoshikimate 1-carboxyvinyltransferase.